A 338-amino-acid polypeptide reads, in one-letter code: UDP-glucose 4-epimerase (338 aa).

Residues 16–17 (YI), 37–42 (IDINHT), 59–60 (NL), 81–85 (FAAKT), T126, Y153, K157, and F181 each bind NAD(+). Substrate contacts are provided by T126 and Y153. Y153 (proton acceptor) is an active-site residue. Substrate contacts are provided by residues N182, 198–199 (TL), 215–217 (FLY), R230, and 294–297 (RAGD).

This sequence belongs to the NAD(P)-dependent epimerase/dehydratase family. As to quaternary structure, homodimer. The cofactor is NAD(+).

The enzyme catalyses UDP-alpha-D-glucose = UDP-alpha-D-galactose. It participates in carbohydrate metabolism; galactose metabolism. Functionally, involved in the metabolism of galactose. Catalyzes the conversion of UDP-galactose (UDP-Gal) to UDP-glucose (UDP-Glc) through a mechanism involving the transient reduction of NAD. The chain is UDP-glucose 4-epimerase (galE) from Mycoplasma pneumoniae (strain ATCC 29342 / M129 / Subtype 1) (Mycoplasmoides pneumoniae).